We begin with the raw amino-acid sequence, 32 residues long: Photosystem I reaction center subunit XII (32 aa).

Residues 9–31 (VYVALVSALITSFLAVRLGLALY) traverse the membrane as a helical segment.

Belongs to the PsaM family.

It localises to the plastid. It is found in the chloroplast thylakoid membrane. The chain is Photosystem I reaction center subunit XII from Chaetosphaeridium globosum (Charophycean green alga).